Consider the following 513-residue polypeptide: Maturase K (513 aa).

It belongs to the intron maturase 2 family. MatK subfamily.

It localises to the plastid. The protein resides in the chloroplast. Its function is as follows. Usually encoded in the trnK tRNA gene intron. Probably assists in splicing its own and other chloroplast group II introns. The chain is Maturase K from Typha angustifolia (Narrow leaf cattail).